We begin with the raw amino-acid sequence, 428 residues long: Putative FBD-associated F-box protein At5g56390 (428 aa).

One can recognise an F-box domain in the interval 2 to 50 (DKISQLHDELLLGILSLLPNAKDVVATMVLSKRWRYLWMMVPSLVYDDS). One can recognise an FBD domain in the interval 344 to 394 (CWNETSLVPEYLLPSLETFEWVDYEGTKTEKQVVAFILRIASCLKQATIVS).

The chain is Putative FBD-associated F-box protein At5g56390 from Arabidopsis thaliana (Mouse-ear cress).